Consider the following 70-residue polypeptide: Gas vesicle protein A (70 aa).

Belongs to the gas vesicle GvpA family. The gas vesicle shell is 2 nm thick and consists of a single layer of this protein. It forms helical ribs nearly perpendicular to the long axis of the vesicle.

Its subcellular location is the gas vesicle shell. Functionally, gas vesicles are hollow, gas filled proteinaceous nanostructures found in some microorganisms. During planktonic growth they allow positioning of the organism at a favorable depth for light or nutrient acquisition. GvpA forms the protein shell. This chain is Gas vesicle protein A, found in Ancylobacter aquaticus.